The chain runs to 278 residues: Large ribosomal subunit protein uL2 (278 aa).

The interval 201-278 (HGNINDGKAG…IMRSRHQRKK (78 aa)) is disordered. Residues 210–221 (GRSRWRGKKPHV) show a composition bias toward basic residues.

This sequence belongs to the universal ribosomal protein uL2 family. In terms of assembly, part of the 50S ribosomal subunit. Forms a bridge to the 30S subunit in the 70S ribosome.

Its function is as follows. One of the primary rRNA binding proteins. Required for association of the 30S and 50S subunits to form the 70S ribosome, for tRNA binding and peptide bond formation. It has been suggested to have peptidyltransferase activity; this is somewhat controversial. Makes several contacts with the 16S rRNA in the 70S ribosome. In Rhizobium rhizogenes (strain K84 / ATCC BAA-868) (Agrobacterium radiobacter), this protein is Large ribosomal subunit protein uL2.